A 462-amino-acid polypeptide reads, in one-letter code: Golgi-associated PDZ and coiled-coil motif-containing protein (462 aa).

Positions 83–194 form a coiled coil; it reads KAQSVSQINH…EDEALRGHIA (112 aa). A PDZ domain is found at 288–371; the sequence is KVLLLKEDHE…EIEFEVVYVA (84 aa). The segment at 427 to 449 is disordered; sequence TDTHENGDLGTASETPLDDGASK.

In terms of assembly, homooligomer. Interacts with FZD5. Interacts with FZD8. Interacts with GRID2 and BECN1. Interacts with CSPG5. Interacts with CLCN3. Interacts with STX6. Interacts with CFTR. Interacts with ASIC3. Interacts with GOLGA3. Interacts with NLGN1. Interacts with RHOQ. Interacts with MARCHF2; the interaction leads to CFTR ubiquitination and degradation. May interact with CACNG2. Interacts with CCDC62.

It localises to the cytoplasm. Its subcellular location is the golgi apparatus membrane. It is found in the golgi apparatus. The protein resides in the trans-Golgi network membrane. The protein localises to the synapse. It localises to the postsynaptic density. Its subcellular location is the cell projection. It is found in the dendrite. Plays a role in intracellular protein trafficking and degradation. May regulate CFTR chloride currents and acid-induced ASIC3 currents by modulating cell surface expression of both channels. May also regulate the intracellular trafficking of the ADR1B receptor. May play a role in autophagy. Together with MARCHF2 mediates the ubiquitination and lysosomal degradation of CFTR. Overexpression results in CFTR intracellular retention and degradation in the lysosomes. In Pongo abelii (Sumatran orangutan), this protein is Golgi-associated PDZ and coiled-coil motif-containing protein (GOPC).